The sequence spans 189 residues: dCTP deaminase, dUMP-forming (189 aa).

Residues 101–106 (KSSLGR), aspartate 119, 127–129 (TLE), glutamine 148, tyrosine 162, lysine 170, and glutamine 174 each bind dCTP. Catalysis depends on glutamate 129, which acts as the Proton donor/acceptor. The tract at residues 163-189 (GSGKLGSKYQGQRGPTPSKAYLNFPNK) is disordered.

It belongs to the dCTP deaminase family. In terms of assembly, homotrimer.

It catalyses the reaction dCTP + 2 H2O = dUMP + NH4(+) + diphosphate. The protein operates within pyrimidine metabolism; dUMP biosynthesis; dUMP from dCTP: step 1/1. In terms of biological role, bifunctional enzyme that catalyzes both the deamination of dCTP to dUTP and the hydrolysis of dUTP to dUMP without releasing the toxic dUTP intermediate. The sequence is that of dCTP deaminase, dUMP-forming from Corynebacterium glutamicum (strain R).